A 196-amino-acid chain; its full sequence is C-type lectin domain family 2 member F (196 aa).

The disordered stretch occupies residues 1-21; it reads MNAQCLKKPEEGESSPGTGDK. The Cytoplasmic portion of the chain corresponds to 1–41; the sequence is MNAQCLKKPEEGESSPGTGDKILQRNSLRAISPESSAKLYC. The helical; Signal-anchor for type II membrane protein transmembrane segment at 42–62 threads the bilayer; it reads CCGVIMVLTVAVVALSVALPA. The Extracellular segment spans residues 63–196; it reads TKTEQILINK…SRSSNYMLQC (134 aa). A disulfide bond links cysteine 77 and cysteine 88. Residues 84–187 enclose the C-type lectin domain; sequence VGNKCFYFSE…DYIPRKWICS (104 aa). N-linked (GlcNAc...) asparagine glycosylation occurs at asparagine 97. Cysteine 105 and cysteine 186 are joined by a disulfide.

The protein resides in the cell membrane. In terms of biological role, lectin-type cell surface receptor. The protein is C-type lectin domain family 2 member F (Clec2f) of Mus musculus (Mouse).